The primary structure comprises 210 residues: Protoporphyrinogen IX oxidase (210 aa).

5 helical membrane passes run 22–42, 74–94, 103–123, 141–161, and 165–185; these read WFKA…FYLV, YNII…GLIF, GWLH…FYCG, FRAL…LAVF, and LPLD…AASI. H27 contributes to the heme binding site. Residue K108 participates in heme binding.

This sequence belongs to the HemJ family. As to quaternary structure, homodimer. Can also form higher oligomers, most probably tetramers. Interacts with Sll1106, however it is unlikely that Sll1106 is required for PPO function. Heme b serves as cofactor.

Its subcellular location is the cell membrane. The catalysed reaction is protoporphyrinogen IX + 3 A = protoporphyrin IX + 3 AH2. It functions in the pathway porphyrin-containing compound metabolism; protoporphyrin-IX biosynthesis; protoporphyrin-IX from protoporphyrinogen-IX: step 1/1. Functionally, catalyzes the oxidation of protoporphyrinogen IX to protoporphyrin IX. Is involved in the biosynthesis of tetrapyrrole molecules like heme and chlorophyll. Does not use oxygen or artificial electron acceptors such as menadione or benzoquinone. Is functionally coupled with coproporphyrinogen III oxidase (CPO). Is essential for growth. This Synechocystis sp. (strain ATCC 27184 / PCC 6803 / Kazusa) protein is Protoporphyrinogen IX oxidase.